The primary structure comprises 92 residues: Small ribosomal subunit protein uS19c (92 aa).

It belongs to the universal ribosomal protein uS19 family.

The protein resides in the plastid. Its subcellular location is the chloroplast. Its function is as follows. Protein S19 forms a complex with S13 that binds strongly to the 16S ribosomal RNA. In Guizotia abyssinica (Niger), this protein is Small ribosomal subunit protein uS19c.